The sequence spans 1040 residues: Putative protein tag-76 (1040 aa).

Polar residues predominate over residues 1 to 15 (MSRRNATSFVDNNTL). 2 disordered regions span residues 1-61 (MSRR…GSVS) and 322-367 (RTSK…PGAN). Over residues 16–32 (TSSGISGSGSMSPPITS) the composition is skewed to low complexity. Residues 33–50 (RPASGQASPLTSNGSLSP) show a composition bias toward polar residues. The segment covering 333–356 (GPGGPGGPGGYRGGRGGGRGGSYG) has biased composition (gly residues). The region spanning 379–486 (FTMDTLSRDT…LPMEHCLIDS (108 aa)) is the PAZ domain. The region spanning 660–966 (CIIVVLQSKN…VATRARCHVK (307 aa)) is the Piwi domain.

This chain is Putative protein tag-76 (tag-76), found in Caenorhabditis elegans.